Consider the following 502-residue polypeptide: Glycerol kinase (502 aa).

Thr-14 is a binding site for ADP. Positions 14, 15, and 16 each coordinate ATP. Thr-14 contacts sn-glycerol 3-phosphate. Arg-18 is a binding site for ADP. Sn-glycerol 3-phosphate is bound by residues Arg-84, Glu-85, Tyr-136, and Asp-246. Glycerol is bound by residues Arg-84, Glu-85, Tyr-136, Asp-246, and Gln-247. ADP contacts are provided by Thr-268 and Gly-311. ATP-binding residues include Thr-268, Gly-311, Gln-315, and Gly-412. ADP is bound by residues Gly-412 and Asn-416.

Belongs to the FGGY kinase family. As to quaternary structure, homotetramer and homodimer (in equilibrium). Heterodimer with EIIA-Glc. Binds 1 zinc ion per glycerol kinase EIIA-Glc dimer. The zinc ion is important for dimerization.

It carries out the reaction glycerol + ATP = sn-glycerol 3-phosphate + ADP + H(+). Its pathway is polyol metabolism; glycerol degradation via glycerol kinase pathway; sn-glycerol 3-phosphate from glycerol: step 1/1. Activity of this regulatory enzyme is affected by several metabolites. Allosterically and non-competitively inhibited by fructose 1,6-bisphosphate (FBP) and unphosphorylated phosphocarrier protein EIIA-Glc (III-Glc), an integral component of the bacterial phosphotransferase (PTS) system. Its function is as follows. Key enzyme in the regulation of glycerol uptake and metabolism. Catalyzes the phosphorylation of glycerol to yield sn-glycerol 3-phosphate. This chain is Glycerol kinase, found in Salmonella arizonae (strain ATCC BAA-731 / CDC346-86 / RSK2980).